The sequence spans 155 residues: Ribosomal RNA large subunit methyltransferase H (155 aa).

S-adenosyl-L-methionine contacts are provided by residues L73, G104, and 123 to 128 (LSALTL).

It belongs to the RNA methyltransferase RlmH family. As to quaternary structure, homodimer.

It localises to the cytoplasm. The enzyme catalyses pseudouridine(1915) in 23S rRNA + S-adenosyl-L-methionine = N(3)-methylpseudouridine(1915) in 23S rRNA + S-adenosyl-L-homocysteine + H(+). Its function is as follows. Specifically methylates the pseudouridine at position 1915 (m3Psi1915) in 23S rRNA. This Chromohalobacter salexigens (strain ATCC BAA-138 / DSM 3043 / CIP 106854 / NCIMB 13768 / 1H11) protein is Ribosomal RNA large subunit methyltransferase H.